The primary structure comprises 314 residues: 4-hydroxy-3-methylbut-2-enyl diphosphate reductase (314 aa).

Cys-12 lines the [4Fe-4S] cluster pocket. Positions 41 and 74 each coordinate (2E)-4-hydroxy-3-methylbut-2-enyl diphosphate. Positions 41 and 74 each coordinate dimethylallyl diphosphate. 2 residues coordinate isopentenyl diphosphate: His-41 and His-74. Residue Cys-96 participates in [4Fe-4S] cluster binding. (2E)-4-hydroxy-3-methylbut-2-enyl diphosphate is bound at residue His-124. Dimethylallyl diphosphate is bound at residue His-124. His-124 contributes to the isopentenyl diphosphate binding site. Glu-126 functions as the Proton donor in the catalytic mechanism. (2E)-4-hydroxy-3-methylbut-2-enyl diphosphate is bound at residue Thr-167. [4Fe-4S] cluster is bound at residue Cys-197. Residues Ser-225, Ser-226, Asn-227, and Ser-269 each coordinate (2E)-4-hydroxy-3-methylbut-2-enyl diphosphate. The dimethylallyl diphosphate site is built by Ser-225, Ser-226, Asn-227, and Ser-269. The isopentenyl diphosphate site is built by Ser-225, Ser-226, Asn-227, and Ser-269.

Belongs to the IspH family. It depends on [4Fe-4S] cluster as a cofactor.

It carries out the reaction isopentenyl diphosphate + 2 oxidized [2Fe-2S]-[ferredoxin] + H2O = (2E)-4-hydroxy-3-methylbut-2-enyl diphosphate + 2 reduced [2Fe-2S]-[ferredoxin] + 2 H(+). It catalyses the reaction dimethylallyl diphosphate + 2 oxidized [2Fe-2S]-[ferredoxin] + H2O = (2E)-4-hydroxy-3-methylbut-2-enyl diphosphate + 2 reduced [2Fe-2S]-[ferredoxin] + 2 H(+). It functions in the pathway isoprenoid biosynthesis; dimethylallyl diphosphate biosynthesis; dimethylallyl diphosphate from (2E)-4-hydroxy-3-methylbutenyl diphosphate: step 1/1. The protein operates within isoprenoid biosynthesis; isopentenyl diphosphate biosynthesis via DXP pathway; isopentenyl diphosphate from 1-deoxy-D-xylulose 5-phosphate: step 6/6. Catalyzes the conversion of 1-hydroxy-2-methyl-2-(E)-butenyl 4-diphosphate (HMBPP) into a mixture of isopentenyl diphosphate (IPP) and dimethylallyl diphosphate (DMAPP). Acts in the terminal step of the DOXP/MEP pathway for isoprenoid precursor biosynthesis. The protein is 4-hydroxy-3-methylbut-2-enyl diphosphate reductase of Haemophilus influenzae (strain PittGG).